Here is a 122-residue protein sequence, read N- to C-terminus: Zein-alpha B49 (122 aa).

This sequence belongs to the zein family.

Functionally, zeins are major seed storage proteins. The polypeptide is Zein-alpha B49 (Zea mays (Maize)).